Reading from the N-terminus, the 255-residue chain is Type III pantothenate kinase (255 aa).

Asp7–Lys14 contacts ATP. Substrate is bound by residues Tyr96 and Gly103–Arg106. Asp105 serves as the catalytic Proton acceptor. Position 133 (Thr133) interacts with ATP. Thr183 serves as a coordination point for substrate.

Belongs to the type III pantothenate kinase family. As to quaternary structure, homodimer. NH4(+) serves as cofactor. It depends on K(+) as a cofactor.

Its subcellular location is the cytoplasm. The enzyme catalyses (R)-pantothenate + ATP = (R)-4'-phosphopantothenate + ADP + H(+). It participates in cofactor biosynthesis; coenzyme A biosynthesis; CoA from (R)-pantothenate: step 1/5. Catalyzes the phosphorylation of pantothenate (Pan), the first step in CoA biosynthesis. This Albidiferax ferrireducens (strain ATCC BAA-621 / DSM 15236 / T118) (Rhodoferax ferrireducens) protein is Type III pantothenate kinase.